The following is a 95-amino-acid chain: MKIEVIKKEEDMLEFYLEGEDHTFANLLTEVLREDPHVKFVAYTIEHPITMARKPRFRVVTDGKVTPEKALEEAARKIFNRAKEVLDAWEKVVKS.

The protein belongs to the archaeal Rpo11/eukaryotic RPB11/RPC19 RNA polymerase subunit family. Part of the RNA polymerase complex.

The protein localises to the cytoplasm. The catalysed reaction is RNA(n) + a ribonucleoside 5'-triphosphate = RNA(n+1) + diphosphate. Functionally, DNA-dependent RNA polymerase (RNAP) catalyzes the transcription of DNA into RNA using the four ribonucleoside triphosphates as substrates. The chain is DNA-directed RNA polymerase subunit Rpo11 from Pyrococcus horikoshii (strain ATCC 700860 / DSM 12428 / JCM 9974 / NBRC 100139 / OT-3).